The sequence spans 161 residues: Lipoprotein LpqH (161 aa).

Residues 1–21 (MNRQLRFAVAGPEILAAVVSG) form the signal peptide. Positions 21-46 (GCSSGNKSAPSSSASSSSTSPSASSG) are enriched in low complexity. Positions 21–49 (GCSSGNKSAPSSSASSSSTSPSASSGGAA) are disordered. Cys22 carries N-palmitoyl cysteine lipidation. Residue Cys22 is the site of S-diacylglycerol cysteine attachment.

It belongs to the mycobacterial 19 kDa antigen family. In terms of processing, modified by Lgt on Cys-22 with an S-linked diacylglycerol with a mixture of C16, C18 and C19 fatty acids, signal peptide is removed by LspA, modifed by Lnt with an amide-linked mixture of C16 and C19 fatty acids.

The protein localises to the cell membrane. In terms of biological role, might be involved in ligand transport. A host TLR2 agonist, modifies host gene expression in response to pathogen. The sequence is that of Lipoprotein LpqH (lpqH) from Mycobacterium avium.